A 419-amino-acid polypeptide reads, in one-letter code: UDP-N-acetylglucosamine 1-carboxyvinyltransferase 2 (419 aa).

Residue 22–23 coordinates phosphoenolpyruvate; the sequence is KN. Residue arginine 92 participates in UDP-N-acetyl-alpha-D-glucosamine binding. Cysteine 116 acts as the Proton donor in catalysis. 2-(S-cysteinyl)pyruvic acid O-phosphothioketal is present on cysteine 116. UDP-N-acetyl-alpha-D-glucosamine contacts are provided by residues 121 to 125, aspartate 306, and isoleucine 328; that span reads RPIDL.

It belongs to the EPSP synthase family. MurA subfamily.

It is found in the cytoplasm. It carries out the reaction phosphoenolpyruvate + UDP-N-acetyl-alpha-D-glucosamine = UDP-N-acetyl-3-O-(1-carboxyvinyl)-alpha-D-glucosamine + phosphate. Its pathway is cell wall biogenesis; peptidoglycan biosynthesis. Functionally, cell wall formation. Adds enolpyruvyl to UDP-N-acetylglucosamine. The protein is UDP-N-acetylglucosamine 1-carboxyvinyltransferase 2 of Streptococcus pyogenes serotype M3 (strain ATCC BAA-595 / MGAS315).